Reading from the N-terminus, the 498-residue chain is Putative antiporter subunit mnhD2 (498 aa).

14 helical membrane-spanning segments follow: residues 2-22 (LSNL…ILVF), 32-52 (YLYL…LIYV), 78-98 (LSLI…AYGF), 108-128 (YHLP…FLTS), 130-150 (LFNL…LITL), 161-181 (IIYV…IGLL), 209-229 (ISLI…FMWL), 240-260 (LAAL…IRFF), 271-291 (IHPL…IGVI), 308-328 (IGFI…GAIF), 330-350 (LVND…LVYI), 369-389 (FGVA…FSGF), 403-423 (GNYI…YSLF), and 451-471 (ILSI…VVLN).

Belongs to the CPA3 antiporters (TC 2.A.63) subunit D family. May form a heterooligomeric complex that consists of seven subunits: mnhA2, mnhB2, mnhC2, mnhD2, mnhE2, mnhF2 and mnhG2.

It localises to the cell membrane. The sequence is that of Putative antiporter subunit mnhD2 (mnhD2) from Staphylococcus aureus (strain JH1).